The chain runs to 251 residues: Probable transcriptional regulatory protein Franean1_5147 (251 aa).

This sequence belongs to the TACO1 family.

It localises to the cytoplasm. This Parafrankia sp. (strain EAN1pec) protein is Probable transcriptional regulatory protein Franean1_5147.